Here is a 285-residue protein sequence, read N- to C-terminus: Phosphatidate cytidylyltransferase (285 aa).

8 helical membrane passes run 10-30 (FVLI…GFAI), 56-76 (VWLA…LPEY), 93-113 (LGWW…AAIW), 121-141 (LIFG…LRAW), 151-171 (AIWL…AYMF), 190-210 (WQGF…YGMW), 213-233 (LDVA…ASVL), and 264-284 (IDSL…VFRT).

It belongs to the CDS family.

The protein localises to the cell inner membrane. It catalyses the reaction a 1,2-diacyl-sn-glycero-3-phosphate + CTP + H(+) = a CDP-1,2-diacyl-sn-glycerol + diphosphate. It participates in phospholipid metabolism; CDP-diacylglycerol biosynthesis; CDP-diacylglycerol from sn-glycerol 3-phosphate: step 3/3. The protein is Phosphatidate cytidylyltransferase (cdsA) of Escherichia coli O157:H7.